Reading from the N-terminus, the 208-residue chain is ATP-dependent Clp protease proteolytic subunit (208 aa).

Catalysis depends on S98, which acts as the Nucleophile. H123 is a catalytic residue.

The protein belongs to the peptidase S14 family. In terms of assembly, fourteen ClpP subunits assemble into 2 heptameric rings which stack back to back to give a disk-like structure with a central cavity, resembling the structure of eukaryotic proteasomes.

The protein localises to the cytoplasm. It carries out the reaction Hydrolysis of proteins to small peptides in the presence of ATP and magnesium. alpha-casein is the usual test substrate. In the absence of ATP, only oligopeptides shorter than five residues are hydrolyzed (such as succinyl-Leu-Tyr-|-NHMec, and Leu-Tyr-Leu-|-Tyr-Trp, in which cleavage of the -Tyr-|-Leu- and -Tyr-|-Trp bonds also occurs).. Its function is as follows. Cleaves peptides in various proteins in a process that requires ATP hydrolysis. Has a chymotrypsin-like activity. Plays a major role in the degradation of misfolded proteins. The polypeptide is ATP-dependent Clp protease proteolytic subunit (Wolbachia pipientis subsp. Culex pipiens (strain wPip)).